Here is a 91-residue protein sequence, read N- to C-terminus: PqqA binding protein (91 aa).

Belongs to the PqqD family. In terms of assembly, monomer. Interacts with PqqE.

It functions in the pathway cofactor biosynthesis; pyrroloquinoline quinone biosynthesis. In terms of biological role, functions as a PqqA binding protein and presents PqqA to PqqE, in the pyrroloquinoline quinone (PQQ) biosynthetic pathway. The chain is PqqA binding protein from Pseudomonas fluorescens (strain ATCC BAA-477 / NRRL B-23932 / Pf-5).